The sequence spans 319 residues: tRNA uridine(34) hydroxylase (319 aa).

One can recognise a Rhodanese domain in the interval 127 to 221; that stretch reads KQEDTVIIDA…YGKDPEVQGE (95 aa). The active-site Cysteine persulfide intermediate is the cysteine 181.

This sequence belongs to the TrhO family.

The enzyme catalyses uridine(34) in tRNA + AH2 + O2 = 5-hydroxyuridine(34) in tRNA + A + H2O. Catalyzes oxygen-dependent 5-hydroxyuridine (ho5U) modification at position 34 in tRNAs. This Bacillus cereus (strain ZK / E33L) protein is tRNA uridine(34) hydroxylase.